A 78-amino-acid polypeptide reads, in one-letter code: Acyl carrier protein (78 aa).

The Carrier domain maps to 1 to 75 (MIKEKILSIV…DLISVVKNST (75 aa)). Serine 35 carries the O-(pantetheine 4'-phosphoryl)serine modification.

The protein belongs to the acyl carrier protein (ACP) family. In terms of processing, 4'-phosphopantetheine is transferred from CoA to a specific serine of apo-ACP by AcpS. This modification is essential for activity because fatty acids are bound in thioester linkage to the sulfhydryl of the prosthetic group.

It localises to the cytoplasm. It functions in the pathway lipid metabolism; fatty acid biosynthesis. Its function is as follows. Carrier of the growing fatty acid chain in fatty acid biosynthesis. This chain is Acyl carrier protein (acpP), found in Shigella flexneri.